A 33-amino-acid chain; its full sequence is MSDIN-like toxin proprotein 2 (33 aa).

A propeptide spanning residues 1-10 (MSDINATRLP) is cleaved from the precursor. The cyclopeptide (Ile-Pro) cross-link spans 11–18 (IILAPIIP). A propeptide spanning residues 19–33 (CINDDVNSTLTSGER) is cleaved from the precursor.

Belongs to the MSDIN fungal toxin family. In terms of processing, processed by the macrocyclase-peptidase enzyme POPB to yield a toxic cyclic octapeptide. POPB first removes 10 residues from the N-terminus. Conformational trapping of the remaining peptide forces the enzyme to release this intermediate rather than proceed to macrocyclization. The enzyme rebinds the remaining peptide in a different conformation and catalyzes macrocyclization of the N-terminal 8 residues.

Functionally, probable toxin that belongs to the MSDIN-like toxin family responsible for a large number of food poisoning cases and deaths. This chain is MSDIN-like toxin proprotein 2, found in Amanita phalloides (Death cap).